We begin with the raw amino-acid sequence, 350 residues long: tRNA uridine(34) hydroxylase (350 aa).

One can recognise a Rhodanese domain in the interval 146–240; that stretch reads DDPDAVFIDM…YARRAREQGL (95 aa). Catalysis depends on C200, which acts as the Cysteine persulfide intermediate. Residues 319-328 show a composition bias toward basic and acidic residues; the sequence is RRRRAGRENG. The tract at residues 319 to 350 is disordered; sequence RRRRAGRENGNKIFNKSRGRLNSKLSIPDPAE.

Belongs to the TrhO family.

It carries out the reaction uridine(34) in tRNA + AH2 + O2 = 5-hydroxyuridine(34) in tRNA + A + H2O. In terms of biological role, catalyzes oxygen-dependent 5-hydroxyuridine (ho5U) modification at position 34 in tRNAs. This Salmonella typhi protein is tRNA uridine(34) hydroxylase.